Reading from the N-terminus, the 275-residue chain is Ribosome-recycling factor, chloroplastic (275 aa).

The N-terminal 82 residues, 1-82 (MAASFSSTAP…SLQKRLVIRS (82 aa)), are a transit peptide targeting the chloroplast. Residues 215–271 (KVALRNIRRDALKSYDKLEKEKKLSEDNVKDLSSDLQKLIDVYMKKIEELYKQKEKE) are a coiled coil.

It belongs to the RRF family.

The protein resides in the plastid. Its subcellular location is the chloroplast. Its function is as follows. Responsible for the release of ribosomes from messenger RNA at the termination of chloroplastic protein biosynthesis. The protein is Ribosome-recycling factor, chloroplastic (RRF) of Arabidopsis thaliana (Mouse-ear cress).